The sequence spans 418 residues: NADH-quinone oxidoreductase subunit D (418 aa).

It belongs to the complex I 49 kDa subunit family. In terms of assembly, NDH-1 is composed of 14 different subunits. Subunits NuoB, C, D, E, F, and G constitute the peripheral sector of the complex.

The protein resides in the cell inner membrane. It carries out the reaction a quinone + NADH + 5 H(+)(in) = a quinol + NAD(+) + 4 H(+)(out). Its function is as follows. NDH-1 shuttles electrons from NADH, via FMN and iron-sulfur (Fe-S) centers, to quinones in the respiratory chain. The immediate electron acceptor for the enzyme in this species is believed to be ubiquinone. Couples the redox reaction to proton translocation (for every two electrons transferred, four hydrogen ions are translocated across the cytoplasmic membrane), and thus conserves the redox energy in a proton gradient. In Neisseria meningitidis serogroup A / serotype 4A (strain DSM 15465 / Z2491), this protein is NADH-quinone oxidoreductase subunit D.